The following is an 86-amino-acid chain: UPF0457 protein SERP1772 (86 aa).

It belongs to the UPF0457 family.

The sequence is that of UPF0457 protein SERP1772 from Staphylococcus epidermidis (strain ATCC 35984 / DSM 28319 / BCRC 17069 / CCUG 31568 / BM 3577 / RP62A).